The following is a 136-amino-acid chain: Urease subunit beta (136 aa).

It belongs to the urease beta subunit family. As to quaternary structure, heterotrimer of UreA (gamma), UreB (beta) and UreC (alpha) subunits. Three heterotrimers associate to form the active enzyme.

The protein resides in the cytoplasm. The enzyme catalyses urea + 2 H2O + H(+) = hydrogencarbonate + 2 NH4(+). Its pathway is nitrogen metabolism; urea degradation; CO(2) and NH(3) from urea (urease route): step 1/1. This chain is Urease subunit beta, found in Staphylococcus aureus (strain Mu3 / ATCC 700698).